The following is a 349-amino-acid chain: MSDDYRETDPTRQPEDMGEGSLRPETLADFTGQKASRENLAIFIEAARARNEALDHVLLHGPPGLGKTTLAQIVARELGVGFRATSGPVIQRAGDLAAILTNLQPRDVLFIDEIHRLQPAIEEVLYPAMEDFQLDLIIGEGPAARSVRIDLAPFTLVAATTRAGLLATPLRDRFGIPLRLVFYTPEELRAIVSRGALKLGMRLTDDGAEEIARRSRGTPRIAGRLLRRVRDFALVSKHAVVDRALADAALGRLEVDERGLDAMDRRYLKRIAEHHHGGPVGVETLAAGLAEARDTLEDVIEPYLIQEGLVLRTARGRMLGEAGWRHLGLTPPASQVDLLSSLEQDDSAP.

Positions 1–15 (MSDDYRETDPTRQPE) are enriched in basic and acidic residues. A disordered region spans residues 1–25 (MSDDYRETDPTRQPEDMGEGSLRPE). The interval 1–183 (MSDDYRETDP…FGIPLRLVFY (183 aa)) is large ATPase domain (RuvB-L). ATP is bound by residues Leu-22, Arg-23, Gly-64, Lys-67, Thr-68, Thr-69, 130–132 (EDF), Arg-173, Tyr-183, and Arg-220. Residue Thr-68 coordinates Mg(2+). The tract at residues 184-254 (TPEELRAIVS…LADAALGRLE (71 aa)) is small ATPAse domain (RuvB-S). The interval 257 to 349 (ERGLDAMDRR…SSLEQDDSAP (93 aa)) is head domain (RuvB-H). 3 residues coordinate DNA: Arg-293, Arg-312, and Arg-317.

The protein belongs to the RuvB family. In terms of assembly, homohexamer. Forms an RuvA(8)-RuvB(12)-Holliday junction (HJ) complex. HJ DNA is sandwiched between 2 RuvA tetramers; dsDNA enters through RuvA and exits via RuvB. An RuvB hexamer assembles on each DNA strand where it exits the tetramer. Each RuvB hexamer is contacted by two RuvA subunits (via domain III) on 2 adjacent RuvB subunits; this complex drives branch migration. In the full resolvosome a probable DNA-RuvA(4)-RuvB(12)-RuvC(2) complex forms which resolves the HJ.

It is found in the cytoplasm. It carries out the reaction ATP + H2O = ADP + phosphate + H(+). In terms of biological role, the RuvA-RuvB-RuvC complex processes Holliday junction (HJ) DNA during genetic recombination and DNA repair, while the RuvA-RuvB complex plays an important role in the rescue of blocked DNA replication forks via replication fork reversal (RFR). RuvA specifically binds to HJ cruciform DNA, conferring on it an open structure. The RuvB hexamer acts as an ATP-dependent pump, pulling dsDNA into and through the RuvAB complex. RuvB forms 2 homohexamers on either side of HJ DNA bound by 1 or 2 RuvA tetramers; 4 subunits per hexamer contact DNA at a time. Coordinated motions by a converter formed by DNA-disengaged RuvB subunits stimulates ATP hydrolysis and nucleotide exchange. Immobilization of the converter enables RuvB to convert the ATP-contained energy into a lever motion, pulling 2 nucleotides of DNA out of the RuvA tetramer per ATP hydrolyzed, thus driving DNA branch migration. The RuvB motors rotate together with the DNA substrate, which together with the progressing nucleotide cycle form the mechanistic basis for DNA recombination by continuous HJ branch migration. Branch migration allows RuvC to scan DNA until it finds its consensus sequence, where it cleaves and resolves cruciform DNA. This is Holliday junction branch migration complex subunit RuvB from Gluconobacter oxydans (strain 621H) (Gluconobacter suboxydans).